Reading from the N-terminus, the 555-residue chain is Potassium-transporting ATPase potassium-binding subunit (555 aa).

The next 10 membrane-spanning stretches (helical) occupy residues 2-22, 60-80, 130-150, 173-193, 246-266, 278-298, 374-394, 412-432, 483-503, and 525-545; these read IWVA…PTGI, QYAL…YFIF, IGIT…VMAF, VFLP…VPQT, MSNI…PFTY, ILFV…TTSE, AGFV…GLMV, LIAV…ALAL, LVMF…AASL, and GIFI…MLVL.

It belongs to the KdpA family. As to quaternary structure, the system is composed of three essential subunits: KdpA, KdpB and KdpC.

It localises to the cell membrane. Functionally, part of the high-affinity ATP-driven potassium transport (or Kdp) system, which catalyzes the hydrolysis of ATP coupled with the electrogenic transport of potassium into the cytoplasm. This subunit binds the extracellular potassium ions and delivers the ions to the membrane domain of KdpB through an intramembrane tunnel. This is Potassium-transporting ATPase potassium-binding subunit from Bacillus cereus (strain AH187).